We begin with the raw amino-acid sequence, 154 residues long: Nascent polypeptide-associated complex subunit beta (154 aa).

In terms of domain architecture, NAC-A/B spans Glu-33 to Ile-98. The disordered stretch occupies residues Ala-125 to Glu-154.

It belongs to the NAC-beta family. Part of the nascent polypeptide-associated complex (NAC), consisting of EGD2 and EGD1. NAC associates with ribosomes via EGD1.

Its subcellular location is the cytoplasm. It localises to the nucleus. In terms of biological role, component of the nascent polypeptide-associated complex (NAC), a dynamic component of the ribosomal exit tunnel, protecting the emerging polypeptides from interaction with other cytoplasmic proteins to ensure appropriate nascent protein targeting. The NAC complex also promotes mitochondrial protein import by enhancing productive ribosome interactions with the outer mitochondrial membrane and blocks the inappropriate interaction of ribosomes translating non-secretory nascent polypeptides with translocation sites in the membrane of the endoplasmic reticulum. EGD1 may act as a transcription factor that exert a negative effect on the expression of several genes that are transcribed by RNA polymerase II. This chain is Nascent polypeptide-associated complex subunit beta (EGD1), found in Scheffersomyces stipitis (strain ATCC 58785 / CBS 6054 / NBRC 10063 / NRRL Y-11545) (Yeast).